Here is a 664-residue protein sequence, read N- to C-terminus: Cyclic nucleotide-gated channel alpha-2 (664 aa).

The segment covering 1 to 20 (MTEKSNGVKSSPANNHNNHV) has biased composition (polar residues). A disordered region spans residues 1–49 (MTEKSNGVKSSPANNHNNHVPATIKANGKDESRTRSRPQSAADDDTSSE). Topologically, residues 1 to 144 (MTEKSNGVKS…PAGDWYYRWL (144 aa)) are cytoplasmic. Residues 145–166 (FVIAMPVLYNWCLLVARACFSD) traverse the membrane as a helical segment. Over 167–176 (LQRGYFLVWL) the chain is Extracellular. The chain crosses the membrane as a helical span at residues 177–197 (VLDYFSDVVYIADLFIRLRTG). The Cytoplasmic portion of the chain corresponds to 198–222 (FLEQGLLVKDPKKLRDNYIHTLQFK). Residues 223–241 (LDVASIIPTDLIYFAVGIH) form a helical membrane-spanning segment. Over 242-246 (NPELR) the chain is Extracellular. Residues 247-265 (FNRLLHFARMFEFFDRTET) form a helical membrane-spanning segment. The Cytoplasmic portion of the chain corresponds to 266–272 (RTSYPNI). Residues 270–378 (PNIFRISNLV…GNVGSMISNM (109 aa)) are ion conduction pathway. The helical transmembrane segment at 273–296 (FRISNLVLYILVIIHWNACIYYAI) threads the bilayer. The Extracellular portion of the chain corresponds to 297–319 (SKSIGFGVDTWVYPNITDPEYGY). Transmembrane regions (helical) follow at residues 320–354 (LARE…LFVI) and 355–379 (FDFL…SNMN). The selectivity filter stretch occupies residues 337–340 (TIGE). Residues 380 to 456 (ATRAEFQAKI…STLKKVRIFQ (77 aa)) are C-linker. At 380–664 (ATRAEFQAKI…SPEPAAAEQP (285 aa)) the chain is on the cytoplasmic side. The segment at 460-580 (AGLLVELVLK…EERGREILMK (121 aa)) is cyclic nucleotide-binding domain. 4 residues coordinate 3',5'-cyclic GMP: Gly520, Ser523, Arg536, and Thr537. The 3',5'-cyclic AMP site is built by Arg536 and Thr537. A coiled-coil region spans residues 597-651 (VQEKLKQLETNMETLYTRFGRLLAEYTGAQQKLKQRITVLEVKMKQNTEDDYLSD). The segment at 644–664 (TEDDYLSDGMNSPEPAAAEQP) is disordered.

Belongs to the cyclic nucleotide-gated cation channel (TC 1.A.1.5) family. CNGA2 subfamily. As to quaternary structure, the olfactory cyclic nucleotide-gated channel is an heterotetramer composed of CNGA2, CNGA4 and CNGB1b subunits with 2:1:1 stoichiometry.

It localises to the cell projection. The protein localises to the cilium membrane. It carries out the reaction Ca(2+)(in) = Ca(2+)(out). It catalyses the reaction Na(+)(in) = Na(+)(out). The catalysed reaction is K(+)(in) = K(+)(out). The enzyme catalyses NH4(+)(in) = NH4(+)(out). It carries out the reaction Rb(+)(in) = Rb(+)(out). It catalyses the reaction Li(+)(in) = Li(+)(out). The catalysed reaction is Cs(+)(in) = Cs(+)(out). Pore-forming subunit of the olfactory cyclic nucleotide-gated channel. Operates in the cilia of olfactory sensory neurons where chemical stimulation of the odorant is converted to an electrical signal. Mediates odorant-induced cAMP-dependent Ca(2+) influx triggering neuron depolarization. The rise of intracellular Ca(2+) levels potentiates the olfactory response by activating Ca(2+)-dependent Cl(-) channels, but it also serves as a negative feedback signal to desensitize the channel for rapid adaptation to odorants. Conducts cAMP- and cGMP-gated ion currents, with permeability for monovalent and divalent cations. This Oryctolagus cuniculus (Rabbit) protein is Cyclic nucleotide-gated channel alpha-2.